The chain runs to 203 residues: TATA-binding protein 2 (203 aa).

Tandem repeats lie at residues 28 to 104 (LQNI…ARII) and 118 to 195 (IQNI…YPVL).

This sequence belongs to the TBP family. Belongs to the TFIID complex together with the TBP-associated factors (TAFs). Binds DNA as monomer. Interacts with RF2A and TFIIB. Interacts with CWZF7.

Its subcellular location is the nucleus. Its function is as follows. General transcription factor that functions at the core of the DNA-binding multiprotein factor TFIID. Binding of TFIID to the TATA box is the initial transcriptional step of the pre-initiation complex (PIC), playing a role in the activation of eukaryotic genes transcribed by RNA polymerase II. The polypeptide is TATA-binding protein 2 (TBP2) (Oryza sativa subsp. japonica (Rice)).